The chain runs to 356 residues: Probable butyrate kinase (356 aa).

This sequence belongs to the acetokinase family.

It localises to the cytoplasm. It catalyses the reaction butanoate + ATP = butanoyl phosphate + ADP. This is Probable butyrate kinase from Clostridium perfringens (strain SM101 / Type A).